The chain runs to 236 residues: Small ribosomal subunit protein uS2c (236 aa).

The protein belongs to the universal ribosomal protein uS2 family.

The protein resides in the plastid. It is found in the chloroplast. The sequence is that of Small ribosomal subunit protein uS2c (rps2) from Olimarabidopsis pumila (Dwarf rocket).